A 662-amino-acid chain; its full sequence is uncharacterized protein (662 aa).

16 helical membrane-spanning segments follow: residues 10–30 (SSIV…GWPV), 46–66 (PVIG…FLPI), 68–88 (AINL…LSKG), 101–121 (GFCW…EIIP), 167–187 (LIYY…TGAT), 193–213 (IALT…LAVA), 217–237 (SAYA…KPAV), 263–283 (PWVP…MAYL), 285–305 (ILYS…AILA), 312–332 (MWAG…LSVS), 342–362 (EVLI…AVLI), 373–393 (KVVE…LDIP), 394–414 (GFWL…FLIW), 432–452 (ALTV…SVIM), 460–480 (VLIP…STTI), and 485–505 (LVGR…ILVG).

Its subcellular location is the cell membrane. This is an uncharacterized protein from Sinorhizobium fredii (strain NBRC 101917 / NGR234).